Consider the following 337-residue polypeptide: Pentalenene synthase (337 aa).

Residues aspartate 80, aspartate 84, asparagine 219, serine 223, and glutamate 227 each coordinate Mg(2+). Residues 80 to 84 carry the DDXXD motif motif; sequence DDLFD.

It belongs to the terpene synthase family. In terms of assembly, monomer. It depends on Mg(2+) as a cofactor.

It carries out the reaction (2E,6E)-farnesyl diphosphate = pentalenene + diphosphate. It functions in the pathway sesquiterpene biosynthesis; pentalenene biosynthesis; pentalenene from farnesyl diphosphate: step 1/1. Its pathway is antibiotic biosynthesis; pentalenolactone biosynthesis. Its function is as follows. Catalyzes the cyclization of farnesyl diphosphate (FPP) to the tricyclic sesquiterpene pentalenene, which is the hydrocarbon precursor of the pentalenolactone family of antibiotics produced by a variety of Streptomyces species. This Streptomyces arenae protein is Pentalenene synthase (pntA).